The sequence spans 258 residues: MMVLPVPVAPWTAALTVLLMVLNKSVVQGRTTPENYLFRAWQECHLTHGRYRYVERYIYNQEEYVRFDSDVGVFRAVTELGRSWADDFNSRKEALEQKRAAPDTGCRHNHELNQRLSQSLIAQPKVHVSPSKGGTLNHHNLLVCQVTDFYPGNIQVRWFRNNQEETTGISTTNPIRNGDWTFQILVTLEMTPQRGDVYTCHVEHPSLDRPITVEWRAQSDSARNKTLTGVGGLVLGLIFLAVGLIMHVRSKKAQRGSR.

An N-terminal signal peptide occupies residues 1–29 (MMVLPVPVAPWTAALTVLLMVLNKSVVQG). The tract at residues 30–121 (RTTPENYLFR…LNQRLSQSLI (92 aa)) is beta-1. The Extracellular portion of the chain corresponds to 30–225 (RTTPENYLFR…RAQSDSARNK (196 aa)). Cystine bridges form between cysteine 44-cysteine 106 and cysteine 144-cysteine 200. The interval 122 to 215 (AQPKVHVSPS…SLDRPITVEW (94 aa)) is beta-2. An Ig-like C1-type domain is found at 124 to 212 (PKVHVSPSKG…EHPSLDRPIT (89 aa)). Residues 216-225 (RAQSDSARNK) are connecting peptide. Asparagine 224 is a glycosylation site (N-linked (GlcNAc...) asparagine). The chain crosses the membrane as a helical span at residues 226–246 (TLTGVGGLVLGLIFLAVGLIM). Over 247–258 (HVRSKKAQRGSR) the chain is Cytoplasmic.

It belongs to the MHC class II family.

The protein resides in the membrane. The chain is SMH class II histocompatibility antigen, beta-1 chain from Spalax ehrenbergi (Middle East blind mole rat).